Reading from the N-terminus, the 501-residue chain is Actin-binding protein WASF3 (501 aa).

Positions 57–93 form a coiled coil; sequence NEANNFYIRANSLQDRIDRLAVKVTQLDSTVEEVSLQ. Tyrosine 151 bears the Phosphotyrosine; by ABL1 mark. The stretch at 162-206 forms a coiled coil; sequence KEKMLQDTEDKRKEKRRQKEQKRVDGTTREVKKVRKARNRRQEWN. A disordered region spans residues 170–443; that stretch reads EDKRKEKRRQ…PPISDARSDL (274 aa). Basic and acidic residues predominate over residues 182–192; the sequence is QKRVDGTTREV. Positions 219-237 are enriched in polar residues; the sequence is RLSQSVHHGASSEGSLSPD. Phosphotyrosine; by ABL1 is present on tyrosine 248. Over residues 256–267 the composition is skewed to polar residues; it reads HALQAQPATPSY. Residues 302–312 are compositionally biased toward pro residues; that stretch reads QQPPPPPPPQA. Tyrosine 337 carries the post-translational modification Phosphotyrosine; by ABL1. 2 stretches are compositionally biased toward pro residues: residues 341–352 and 394–410; these read SGPPPPPPPPMI and APPPPGPPPPPPGPPGP. A compositionally biased stretch (low complexity) spans 411-422; the sequence is SSLSSSPMHGPP. The WH2 domain occupies 439–456; the sequence is ARSDLLAAIRMGIQLKKV. Phosphotyrosine; by ABL1 is present on tyrosine 485.

It belongs to the SCAR/WAVE family. In terms of assembly, binds actin and the Arp2/3 complex. Post-translationally, phosphorylation by ABL1 promotes lamellipodia formation and cell migration.

The protein localises to the cytoplasm. It is found in the cytoskeleton. Its function is as follows. Downstream effector molecules involved in the transmission of signals from tyrosine kinase receptors and small GTPases to the actin cytoskeleton. Plays a role in the regulation of cell morphology and cytoskeletal organization. Required in the control of cell shape. The chain is Actin-binding protein WASF3 (Wasf3) from Mus musculus (Mouse).